Consider the following 402-residue polypeptide: Argininosuccinate synthase (402 aa).

ATP contacts are provided by residues 10–18 (AYSGGLDTS) and Ala-38. An L-citrulline-binding site is contributed by Tyr-90. An ATP-binding site is contributed by Gly-120. Residues Thr-122, Asn-126, and Asp-127 each contribute to the L-aspartate site. Asn-126 is an L-citrulline binding site. Residues Arg-130, Ser-179, Ser-188, Glu-264, and Tyr-276 each coordinate L-citrulline.

The protein belongs to the argininosuccinate synthase family. Type 1 subfamily. Homotetramer.

The protein resides in the cytoplasm. The catalysed reaction is L-citrulline + L-aspartate + ATP = 2-(N(omega)-L-arginino)succinate + AMP + diphosphate + H(+). The protein operates within amino-acid biosynthesis; L-arginine biosynthesis; L-arginine from L-ornithine and carbamoyl phosphate: step 2/3. This is Argininosuccinate synthase from Psychromonas ingrahamii (strain DSM 17664 / CCUG 51855 / 37).